The following is a 285-amino-acid chain: Probable endonuclease 4 (285 aa).

Residues histidine 69, histidine 109, glutamate 145, aspartate 179, histidine 182, histidine 216, aspartate 229, histidine 231, and glutamate 261 each coordinate Zn(2+).

This sequence belongs to the AP endonuclease 2 family. It depends on Zn(2+) as a cofactor.

The enzyme catalyses Endonucleolytic cleavage to 5'-phosphooligonucleotide end-products.. Functionally, endonuclease IV plays a role in DNA repair. It cleaves phosphodiester bonds at apurinic or apyrimidinic (AP) sites, generating a 3'-hydroxyl group and a 5'-terminal sugar phosphate. The chain is Probable endonuclease 4 from Yersinia pestis bv. Antiqua (strain Antiqua).